Consider the following 238-residue polypeptide: CFA/I fimbrial subunit A (238 aa).

The first 19 residues, Met1 to Ala19, serve as a signal peptide directing secretion.

The protein localises to the fimbrium. Might function as a shuttle protein in the transport of fimbria through the periplasmic space or might function as an adhesin. The sequence is that of CFA/I fimbrial subunit A (cfaA) from Escherichia coli.